The sequence spans 555 residues: Formate--tetrahydrofolate ligase (555 aa).

Residue 64-71 participates in ATP binding; sequence TKAGIGKT.

This sequence belongs to the formate--tetrahydrofolate ligase family.

It catalyses the reaction (6S)-5,6,7,8-tetrahydrofolate + formate + ATP = (6R)-10-formyltetrahydrofolate + ADP + phosphate. It functions in the pathway one-carbon metabolism; tetrahydrofolate interconversion. In Bacteroides thetaiotaomicron (strain ATCC 29148 / DSM 2079 / JCM 5827 / CCUG 10774 / NCTC 10582 / VPI-5482 / E50), this protein is Formate--tetrahydrofolate ligase.